Consider the following 843-residue polypeptide: Protein kintoun (843 aa).

4 disordered regions span residues 212-242 (PTAE…VHPM), 371-417 (FSRE…PVHS), 545-672 (YTVK…GASQ), and 761-843 (KKNQ…DDVM). Phosphoserine is present on Ser-376. The segment covering 387 to 397 (PVEEEEADADL) has biased composition (acidic residues). Over residues 564–573 (VKFDHNKESL) the composition is skewed to basic and acidic residues. Residues 584–593 (TEEDEVEEQH) show a composition bias toward acidic residues. The segment covering 605-619 (QNKKPSKKQRKRNKK) has biased composition (basic residues). A compositionally biased stretch (polar residues) spans 658–671 (YSECNDSSVGSGAS). Residues 761–775 (KKNQKRRDLKLRAQQ) are compositionally biased toward basic residues. At Ser-779 the chain carries Phosphoserine.

This sequence belongs to the PIH1 family. Kintoun subfamily. As to quaternary structure, interacts with Pp1alpha-96A, Pp1-87B, Pp1-13C and flw.

Its subcellular location is the cytoplasm. Functionally, required for cytoplasmic pre-assembly of axonemal dyneins, thereby playing a central role in motility in cilia and flagella. Involved in pre-assembly of dynein arm complexes in the cytoplasm before intraflagellar transport loads them for the ciliary compartment. This is Protein kintoun from Drosophila ananassae (Fruit fly).